Here is a 193-residue protein sequence, read N- to C-terminus: MAQGSNYKVPFRRRREGKTDYAARMKLVDYDKSRLVVRLSNAHATVQVIDYAPEGDITLASAVSKQLANYGYLGGASNTSAVYLTGYLCAKRALAKGVDSAILDIGLKSAIKGSKVFAALKGAVDAGLDIPYGEAVLPDESRINGEHVANYAESLDDDEIAKLFSKYLERGLQPADLPKNFEETKKNIDEAEE.

Belongs to the universal ribosomal protein uL18 family. As to quaternary structure, part of the 50S ribosomal subunit. Contacts the 5S and 23S rRNAs.

This is one of the proteins that bind and probably mediate the attachment of the 5S RNA into the large ribosomal subunit, where it forms part of the central protuberance. This Methanobrevibacter smithii (strain ATCC 35061 / DSM 861 / OCM 144 / PS) protein is Large ribosomal subunit protein uL18.